The sequence spans 448 residues: C4-dicarboxylate transport protein (448 aa).

The next 9 helical transmembrane spans lie at 9–29 (SLYFQVIVAIIAGILVGHFYP), 59–79 (LIKMIIAPVIFCTVVSGIAGM), 91–111 (VALLYFEVVSTIALLIGLLVI), 159–179 (AFANGEILQVLLFAIMFGFAL), 203–223 (IVNMIMKLAPIGAFGAMAFTI), 237–257 (LIICFYVTCLLFIFIVLGTIS), 312–332 (GYSFNLDGTSIYLTMAAIFIA), 345–365 (ITLLLVLLISSKGAAGVTGSG), and 367–387 (IVMAATLSAVGHIPVAGLALI).

The protein belongs to the dicarboxylate/amino acid:cation symporter (DAACS) (TC 2.A.23) family.

Its subcellular location is the cell inner membrane. Its function is as follows. Responsible for the transport of dicarboxylates such as succinate, fumarate, and malate from the periplasm across the membrane. This is C4-dicarboxylate transport protein from Acinetobacter baylyi (strain ATCC 33305 / BD413 / ADP1).